The chain runs to 94 residues: Putative toxin RelE4 (94 aa).

Belongs to the RelE toxin family.

Toxic component of a type II toxin-antitoxin (TA) system. Its cognate antitoxin is RelB4 (Potential). The sequence is that of Putative toxin RelE4 (relE4) from Methanocaldococcus jannaschii (strain ATCC 43067 / DSM 2661 / JAL-1 / JCM 10045 / NBRC 100440) (Methanococcus jannaschii).